Here is an 864-residue protein sequence, read N- to C-terminus: Translation initiation factor IF-2 (864 aa).

A disordered region spans residues 1 to 252 (MEDKNKTIKE…KTSSDKRDFS (252 aa)). Residues 78 to 90 (KEVKYEESSRKQD) show a composition bias toward basic and acidic residues. Polar residues predominate over residues 106-120 (VRPSGDSSYPVSRSP). Residues 150–212 (RGPGQGGGYQ…PGNRSGGPGG (63 aa)) show a composition bias toward gly residues. Residues 239-252 (HDKEKTSSDKRDFS) are compositionally biased toward basic and acidic residues. Residues 359–528 (NRPPVVTIMG…LLQAEVMDLK (170 aa)) form the tr-type G domain. Residues 368 to 375 (GHVDHGKT) form a G1 region. 368-375 (GHVDHGKT) is a GTP binding site. A G2 region spans residues 393 to 397 (GITQH). The tract at residues 414–417 (DTPG) is G3. Residues 414–418 (DTPGH) and 468–471 (NKID) contribute to the GTP site. The tract at residues 468-471 (NKID) is G4. The interval 504-506 (SAR) is G5.

It belongs to the TRAFAC class translation factor GTPase superfamily. Classic translation factor GTPase family. IF-2 subfamily.

Its subcellular location is the cytoplasm. In terms of biological role, one of the essential components for the initiation of protein synthesis. Protects formylmethionyl-tRNA from spontaneous hydrolysis and promotes its binding to the 30S ribosomal subunits. Also involved in the hydrolysis of GTP during the formation of the 70S ribosomal complex. This chain is Translation initiation factor IF-2, found in Leptospira borgpetersenii serovar Hardjo-bovis (strain L550).